We begin with the raw amino-acid sequence, 88 residues long: Small ribosomal subunit protein uS15 (88 aa).

The protein belongs to the universal ribosomal protein uS15 family. Part of the 30S ribosomal subunit. Forms a bridge to the 50S subunit in the 70S ribosome, contacting the 23S rRNA.

Functionally, one of the primary rRNA binding proteins, it binds directly to 16S rRNA where it helps nucleate assembly of the platform of the 30S subunit by binding and bridging several RNA helices of the 16S rRNA. Its function is as follows. Forms an intersubunit bridge (bridge B4) with the 23S rRNA of the 50S subunit in the ribosome. This chain is Small ribosomal subunit protein uS15, found in Paracidovorax citrulli (strain AAC00-1) (Acidovorax citrulli).